The sequence spans 351 residues: Glycerol-3-phosphate dehydrogenase [NAD(P)+] (351 aa).

Positions 18, 19, 38, and 122 each coordinate NADPH. Residues lysine 122, glycine 153, and serine 155 each coordinate sn-glycerol 3-phosphate. Alanine 157 is a binding site for NADPH. Sn-glycerol 3-phosphate is bound by residues lysine 208, aspartate 261, serine 271, arginine 272, and asparagine 273. Lysine 208 acts as the Proton acceptor in catalysis. Arginine 272 lines the NADPH pocket. NADPH is bound at residue glutamate 297.

This sequence belongs to the NAD-dependent glycerol-3-phosphate dehydrogenase family.

It localises to the cytoplasm. The catalysed reaction is sn-glycerol 3-phosphate + NAD(+) = dihydroxyacetone phosphate + NADH + H(+). It catalyses the reaction sn-glycerol 3-phosphate + NADP(+) = dihydroxyacetone phosphate + NADPH + H(+). Its pathway is membrane lipid metabolism; glycerophospholipid metabolism. Its function is as follows. Catalyzes the reduction of the glycolytic intermediate dihydroxyacetone phosphate (DHAP) to sn-glycerol 3-phosphate (G3P), the key precursor for phospholipid synthesis. This Bordetella pertussis (strain Tohama I / ATCC BAA-589 / NCTC 13251) protein is Glycerol-3-phosphate dehydrogenase [NAD(P)+].